The sequence spans 150 residues: uncharacterized protein (150 aa).

The region spanning 5-66 (LDRTDKMLLE…KPNYKKLNLG (62 aa)) is the HTH asnC-type domain. Positions 24–43 (IAALSKKLGIPRTTVHYRIK) form a DNA-binding region, H-T-H motif.

This is an uncharacterized protein from Pyrococcus furiosus (strain ATCC 43587 / DSM 3638 / JCM 8422 / Vc1).